A 1342-amino-acid polypeptide reads, in one-letter code: DNA-directed RNA polymerase subunit beta (1342 aa).

It belongs to the RNA polymerase beta chain family. As to quaternary structure, the RNAP catalytic core consists of 2 alpha, 1 beta, 1 beta' and 1 omega subunit. When a sigma factor is associated with the core the holoenzyme is formed, which can initiate transcription.

The catalysed reaction is RNA(n) + a ribonucleoside 5'-triphosphate = RNA(n+1) + diphosphate. In terms of biological role, DNA-dependent RNA polymerase catalyzes the transcription of DNA into RNA using the four ribonucleoside triphosphates as substrates. This chain is DNA-directed RNA polymerase subunit beta, found in Edwardsiella ictaluri (strain 93-146).